A 705-amino-acid chain; its full sequence is Choline transporter-like protein 2 (705 aa).

The Cytoplasmic portion of the chain corresponds to 1-31 (MEDQRKYGAYGTPQKYDPTFKGPIYNRGCTD). Thr-12 is modified (phosphothreonine). A helical membrane pass occupies residues 32 to 52 (VLCCVLLFLAIVGYVAVGLIA). The Extracellular portion of the chain corresponds to 53 to 231 (WTHGDPRKVI…RIFEDYTVSW (179 aa)). Asn-186 and Asn-199 each carry an N-linked (GlcNAc...) asparagine glycan. The helical transmembrane segment at 232 to 252 (YWIVIGLVIAMVLSLLFIILL) threads the bilayer. Residues 253–255 (RFL) lie on the Cytoplasmic side of the membrane. The chain crosses the membrane as a helical span at residues 256 to 276 (AGIMVWVMIVLVILVLGYGIF). Over 277 to 314 (HCYMEYARLRGEAGSDISVLDLGFQTDFRVYLHLRQTW) the chain is Extracellular. Residues 315-335 (LAFMIILSILEVIIILLLIFL) form a helical membrane-spanning segment. The Cytoplasmic segment spans residues 336-363 (RKRILIAIALIKEASRAVGYVMCSLLYP). A helical membrane pass occupies residues 364 to 384 (LVTFFLLCLCIAYWASTAVFL). The Extracellular portion of the chain corresponds to 385-455 (STSNEAVYKI…IFNAFMFFWL (71 aa)). The N-linked (GlcNAc...) asparagine glycan is linked to Asn-414. Residues 456–478 (ANFVLALGQVTLAGAFASYYWAL) traverse the membrane as a helical segment. The Cytoplasmic portion of the chain corresponds to 479 to 503 (RKPDDMPAFPLFAAFGRALRYHTGS). The chain crosses the membrane as a helical span at residues 504-524 (LAFGSLILAIVQIIRVILEYL). Residues 525-562 (DQRLKAAENKFAKFLMTCLKCCFWCLEKFIKFLNRNAY) lie on the Extracellular side of the membrane. The chain crosses the membrane as a helical span at residues 563–583 (IMIAIYGTNFCTSARNAFFLL). Residues 584–598 (MRNIIRVAVLDKVTD) are Cytoplasmic-facing. Residues 599–619 (FLFLLGKLLIVGSVGILAFFF) traverse the membrane as a helical segment. Residues 620 to 637 (FTHRIRIVQDTAPPLNYY) are Extracellular-facing. Residues 638–658 (WVPILTVIVGSYLIAHGFFSV) traverse the membrane as a helical segment. The Cytoplasmic portion of the chain corresponds to 659-705 (YGMCVDTLFLCFLEDLERNNGSSERPYFMSSTLKKLLNKTNKKPVES).

This sequence belongs to the CTL (choline transporter-like) family. As to quaternary structure, interacts with COCH. N-glycosylated; contains sialic acid. Not O-glycosylated. Expressed at high levels in lung, colon and in supporting cells of the inner ear (at protein level). Progressively lower levels in brain, tongue, liver and kidney (at protein level). In the tongue, strongly expressed in epithelial cells and in nerves within the musculature. Within the nerves, expression observed in the perineurial cells of the nerve sheath, in the Schwann cells and myelinated nerve fibers (at protein level). In the kidney, prominent expression in glomeruli in the lining of Bowman's capsule and on the mesangial cells adjacent to the vessels within the glomerulus (at protein level). Strongly expressed on the membranes of splenocytes (at protein level).

The protein resides in the cell membrane. It localises to the mitochondrion outer membrane. The catalysed reaction is choline(out) + n H(+)(in) = choline(in) + n H(+)(out). It carries out the reaction ethanolamine(out) + n H(+)(in) = ethanolamine(in) + n H(+)(out). In terms of biological role, choline/H+ antiporter, mainly in mitochodria. Also acts as a low-affinity ethanolamine/H+ antiporter, regulating the supply of extracellular ethanolamine (Etn) for the CDP-Etn pathway, redistribute intracellular Etn and balance the CDP-Cho and CDP-Etn arms of the Kennedy pathway. This is Choline transporter-like protein 2 (SLC44A2) from Cavia porcellus (Guinea pig).